Consider the following 412-residue polypeptide: GATOR complex protein NPRL2 (412 aa).

It belongs to the NPR2 family. In terms of assembly, component of the GATOR complex consisting of mio, Nup44A/Seh1, Im11, Nplr3, Nplr2, Wdr24, Wdr59 and Sec13. Within the GATOR complex, probable component of the GATOR1 subcomplex which is likely composed of Iml1, Nplr2 and Nplr3. Interacts with Nprl3.

It localises to the cytoplasm. Its subcellular location is the lysosome. Functionally, an essential component of the GATOR subcomplex GATOR1 which functions as an inhibitor of the amino acid-sensing branch of the TORC1 signaling pathway. The two GATOR subcomplexes, GATOR1 and GATOR2, regulate the TORC1 pathway in order to mediate metabolic homeostasis, female gametogenesis and the response to amino acid limitation and complete starvation. The function of GATOR1 in negatively regulating the TORC1 pathway is essential for maintaining baseline levels of TORC1 activity under nutrient rich conditions, and for promoting survival during amino acid or complete starvation by inhibiting TORC1-dependent cell growth and promoting catabolic metabolism and autophagy. In addition, this inhibition of TORC1 is necessary to maintain female fertility under normal conditions and during periods of nutrient stress. GATOR1 and GATOR2 act at different stages of oogenesis to regulate TORC1 in order to control meiotic entry and promote oocyte growth and development. After exactly four mitotic cyst divisions, the GATOR1 complex members (Iml1, Nprl2 and Nprl3) down-regulate TORC1 to slow cellular metabolism and promote the mitotic/meiotic transition. At later stages of oogenesis, the mio and Nup44A components of the GATOR2 complex inhibit GATOR1 and thus activate TORC1 to promote meiotic progression, and drive oocyte growth and development. This chain is GATOR complex protein NPRL2, found in Drosophila melanogaster (Fruit fly).